The sequence spans 148 residues: UPF0260 protein KPN78578_22800 (148 aa).

It belongs to the UPF0260 family.

This is UPF0260 protein KPN78578_22800 from Klebsiella pneumoniae subsp. pneumoniae (strain ATCC 700721 / MGH 78578).